Consider the following 155-residue polypeptide: Endoribonuclease YbeY (155 aa).

Zn(2+)-binding residues include His-117, His-121, and His-127.

It belongs to the endoribonuclease YbeY family. It depends on Zn(2+) as a cofactor.

It localises to the cytoplasm. Its function is as follows. Single strand-specific metallo-endoribonuclease involved in late-stage 70S ribosome quality control and in maturation of the 3' terminus of the 16S rRNA. The sequence is that of Endoribonuclease YbeY from Dichelobacter nodosus (strain VCS1703A).